The chain runs to 342 residues: Cytosolic Fe-S cluster assembly factor NBP35 (342 aa).

The tract at residues 1–45 (MGPSLETPEPVEDVLANPLKQKPQLVAPEPEHCPGPESEQAGTAD) is disordered. Residues C33, C47, C50, and C56 each coordinate [4Fe-4S] cluster. 86-93 (GKGGVGKS) provides a ligand contact to ATP. Residues C259 and C262 each coordinate [4Fe-4S] cluster.

It belongs to the Mrp/NBP35 ATP-binding proteins family. NUBP1/NBP35 subfamily. As to quaternary structure, heterotetramer of 2 NBP35 and 2 CFD1 chains. Requires [4Fe-4S] cluster as cofactor.

Its subcellular location is the cytoplasm. In terms of biological role, component of the cytosolic iron-sulfur (Fe/S) protein assembly (CIA) machinery. Required for maturation of extramitochondrial Fe-S proteins. The NBP35-CFD1 heterotetramer forms a Fe-S scaffold complex, mediating the de novo assembly of an Fe-S cluster and its transfer to target apoproteins. This is Cytosolic Fe-S cluster assembly factor NBP35 from Chaetomium globosum (strain ATCC 6205 / CBS 148.51 / DSM 1962 / NBRC 6347 / NRRL 1970) (Soil fungus).